The sequence spans 393 residues: Putative acid--amine ligase HI_0929 (393 aa).

An ATP-binding site is contributed by 103–105; sequence RFD. Residues D105, E117, and N119 each coordinate Mg(2+). ATP contacts are provided by residues K267, K303, G310, Q343, and 378 to 380; that span reads AVT.

This sequence belongs to the glutathionylspermidine synthase preATP-grasp family.

In terms of biological role, may be a ligase forming an amide bond. Shows ATPase activity. The chain is Putative acid--amine ligase HI_0929 from Haemophilus influenzae (strain ATCC 51907 / DSM 11121 / KW20 / Rd).